The chain runs to 148 residues: MNDPKQIEKLYKLIAAGEGFNPNSPLGSMMVETQALTKKFAVISFFGAVEKRELDMIKTFVEKGEIDINVKNLVPQGLILTRPTTALGIAIAQGNSEEVIKYLLANGADPKLAFDDFKKSANIDGINQLIKIAPDMIACRKKYMNLNN.

One copy of the ANK repeat lies at 82-115 (RPTTALGIAIAQGNSEEVIKYLLANGADPKLAFD).

In Rickettsia felis (strain ATCC VR-1525 / URRWXCal2) (Rickettsia azadi), this protein is Putative ankyrin repeat protein RF_1158.